Reading from the N-terminus, the 27-residue chain is Conotoxin Bt9.2 (27 aa).

Cystine bridges form between Cys-2-Cys-16, Cys-6-Cys-19, and Cys-12-Cys-24. Pro-13 carries the post-translational modification 4-hydroxyproline.

As to expression, expressed by the venom duct.

The protein localises to the secreted. Probable neurotoxin that inhibits ion channels. The protein is Conotoxin Bt9.2 of Conus betulinus (Beech cone).